A 240-amino-acid chain; its full sequence is Enolase-phosphatase E1 (240 aa).

Belongs to the HAD-like hydrolase superfamily. MasA/MtnC family. Monomer. Mg(2+) serves as cofactor.

The catalysed reaction is 5-methylsulfanyl-2,3-dioxopentyl phosphate + H2O = 1,2-dihydroxy-5-(methylsulfanyl)pent-1-en-3-one + phosphate. It participates in amino-acid biosynthesis; L-methionine biosynthesis via salvage pathway; L-methionine from S-methyl-5-thio-alpha-D-ribose 1-phosphate: step 3/6. The protein operates within amino-acid biosynthesis; L-methionine biosynthesis via salvage pathway; L-methionine from S-methyl-5-thio-alpha-D-ribose 1-phosphate: step 4/6. Functionally, bifunctional enzyme that catalyzes the enolization of 2,3-diketo-5-methylthiopentyl-1-phosphate (DK-MTP-1-P) into the intermediate 2-hydroxy-3-keto-5-methylthiopentenyl-1-phosphate (HK-MTPenyl-1-P), which is then dephosphorylated to form the acireductone 1,2-dihydroxy-3-keto-5-methylthiopentene (DHK-MTPene). The polypeptide is Enolase-phosphatase E1 (Saccharopolyspora erythraea (strain ATCC 11635 / DSM 40517 / JCM 4748 / NBRC 13426 / NCIMB 8594 / NRRL 2338)).